Consider the following 281-residue polypeptide: Phosphatidylglycerol--prolipoprotein diacylglyceryl transferase (281 aa).

The next 4 membrane-spanning stretches (helical) occupy residues 23-43 (VGPL…MFAW), 71-91 (FVIW…VLFY), 107-127 (WDGG…MILF), and 133-153 (IKVW…LGVV). A 1,2-diacyl-sn-glycero-3-phospho-(1'-sn-glycerol) is bound at residue R154. Helical transmembrane passes span 189–209 (LYEA…LVWV), 217–237 (GFIA…VEFF), and 247–267 (LFGG…LIGL).

This sequence belongs to the Lgt family.

It is found in the cell inner membrane. The catalysed reaction is L-cysteinyl-[prolipoprotein] + a 1,2-diacyl-sn-glycero-3-phospho-(1'-sn-glycerol) = an S-1,2-diacyl-sn-glyceryl-L-cysteinyl-[prolipoprotein] + sn-glycerol 1-phosphate + H(+). Its pathway is protein modification; lipoprotein biosynthesis (diacylglyceryl transfer). In terms of biological role, catalyzes the transfer of the diacylglyceryl group from phosphatidylglycerol to the sulfhydryl group of the N-terminal cysteine of a prolipoprotein, the first step in the formation of mature lipoproteins. The sequence is that of Phosphatidylglycerol--prolipoprotein diacylglyceryl transferase from Brucella anthropi (strain ATCC 49188 / DSM 6882 / CCUG 24695 / JCM 21032 / LMG 3331 / NBRC 15819 / NCTC 12168 / Alc 37) (Ochrobactrum anthropi).